A 395-amino-acid polypeptide reads, in one-letter code: Ketol-acid reductoisomerase, mitochondrial (395 aa).

Residues 1–47 (MLRTQAARLICNSRVITAKRTFALATRAAAYSRPAARFVKPMITTRG) constitute a mitochondrion transit peptide. Residues 57–246 (VETVYERADW…AIGSGYVYQT (190 aa)) form the KARI N-terminal Rossmann domain. NADP(+) is bound by residues 84–93 (GYGSQGYGQG), 108–113 (RKDGAS), and 146–150 (SDAAQ). Residue H171 is part of the active site. The 148-residue stretch at 247–394 (TFEREVNSDL…KEVRKLRPEN (148 aa)) folds into the KARI C-terminal knotted domain. 4 residues coordinate Mg(2+): D255, E259, E291, and E295. Position 317 (S317) interacts with substrate. At S355 the chain carries Phosphoserine. Residues 363-395 (DYREKLEKELDTIRNMEIWKVGKEVRKLRPENQ) form a hydrophilic region.

Belongs to the ketol-acid reductoisomerase family. It depends on Mg(2+) as a cofactor.

Its subcellular location is the mitochondrion. It catalyses the reaction (2R)-2,3-dihydroxy-3-methylbutanoate + NADP(+) = (2S)-2-acetolactate + NADPH + H(+). The enzyme catalyses (2R,3R)-2,3-dihydroxy-3-methylpentanoate + NADP(+) = (S)-2-ethyl-2-hydroxy-3-oxobutanoate + NADPH + H(+). It functions in the pathway amino-acid biosynthesis; L-isoleucine biosynthesis; L-isoleucine from 2-oxobutanoate: step 2/4. Its pathway is amino-acid biosynthesis; L-valine biosynthesis; L-valine from pyruvate: step 2/4. Its function is as follows. Involved in the biosynthesis of branched-chain amino acids (BCAA). Catalyzes the second common step in the parallel biosynthesis of isoleucine and valine. Converts alpha-aceto-alpha-hydroxybutyrate (AHB) to alpha,beta-dihydroxy-beta-methylvalerate (DHMV) and alpha-acetolactate (AL) to alpha,beta-dihydroxy-isovalerate (DHV) in isoleucine and valine biosynthesis, respectively. This chain is Ketol-acid reductoisomerase, mitochondrial, found in Saccharomyces cerevisiae (strain ATCC 204508 / S288c) (Baker's yeast).